A 298-amino-acid polypeptide reads, in one-letter code: MRNTILFGVSMILLANLCFGIMSAFVKITADYFSPMENVFYRSITMTLLLLLIYPFKPYRLKSYKQGGFKKLAFRVVVGGLAMLAFFYNIEKISLATATAFSQCAPIYTVLLSPLLLKEKLKRSTLISACIGIVGVVLISDPSVENVGPVEIFMGILSGIFVSLAYITLRDLREYYDKQAVILAFAFGMSLLGLVGMFIDIPFLSTGIHVPRKEDILWISLIGISGTLGQYFLTYAYMNAPAGIIAPIEYTRIVWGLLFGLYLGDTFLDLKSSLGVALILCSGLLIALPALLKELKKI.

10 helical membrane passes run 5–25 (ILFG…MSAF), 36–56 (MENV…IYPF), 76–96 (VVVG…ISLA), 97–117 (TATA…PLLL), 124–144 (STLI…DPSV), 147–167 (VGPV…LAYI), 181–201 (VILA…FIDI), 216–236 (ILWI…LTYA), 244–264 (IIAP…LYLG), and 272–292 (SSLG…PALL). The region spanning 17-141 (LCFGIMSAFV…GIVGVVLISD (125 aa)) is the EamA 1 domain. Residues 183–288 (LAFAFGMSLL…ILCSGLLIAL (106 aa)) enclose the EamA 2 domain.

It belongs to the EamA transporter family.

It is found in the cell membrane. This is an uncharacterized protein from Helicobacter pylori (strain ATCC 700392 / 26695) (Campylobacter pylori).